The chain runs to 352 residues: C-C chemokine receptor type 5 (352 aa).

At 1 to 30 (MDYQVSSPTYDIDYYTSEPCQKINVKQIAA) the chain is on the extracellular side. Y3 bears the Sulfotyrosine mark. S6 and S7 each carry an O-linked (GalNAc...) serine glycan. 3 positions are modified to sulfotyrosine: Y10, Y14, and Y15. 2 disulfide bridges follow: C20–C269 and C101–C178. A helical transmembrane segment spans residues 31 to 58 (RLLPPLYSLVFIFGFVGNILVVLILINC). The Cytoplasmic portion of the chain corresponds to 59–68 (KRLKSMTDIY). The chain crosses the membrane as a helical span at residues 69–89 (LLNLAISDLLFLLTIPFWAHY). Over 90–102 (AAAQWDFGNTMCQ) the chain is Extracellular. The helical transmembrane segment at 103-124 (LLTGLYLIGFFSGIFFIILLTI) threads the bilayer. Residues 125 to 141 (DRYLAIVHAVFALKART) lie on the Cytoplasmic side of the membrane. The chain crosses the membrane as a helical span at residues 142–166 (VTFGLVTSVITWVVAVFASLPGIIF). The Extracellular segment spans residues 167–198 (TRSQREGLHYTCSSHFPSSQYQFWKNFQTLKI). A helical membrane pass occupies residues 199–218 (VILGLVLPLLVMVICYSGIL). Over 219-235 (KTLLRCRNEKKRHRAVR) the chain is Cytoplasmic. A helical transmembrane segment spans residues 236–260 (LIFTIMIVYFLFWAPYNIVLLLNTF). The Extracellular portion of the chain corresponds to 261–277 (QEFFGLNNCSSSNRLDQ). The helical transmembrane segment at 278-301 (AMQVTETLGMTHCCINPIIYAFVG) threads the bilayer. Residues 302 to 352 (EKFRNYLLVFFQKHLAKRFCKCCSIFQQEAPERASSVYTRSTGEQETTVGL) are Cytoplasmic-facing. S-palmitoyl cysteine attachment occurs at residues C321, C323, and C324. 3 positions are modified to phosphoserine; by BARK1: S336, S337, and S342.

Belongs to the G-protein coupled receptor 1 family. As to quaternary structure, interacts with PRAF2. Efficient ligand binding to CCL3/MIP-1alpha and CCL4/MIP-1beta requires sulfation, O-glycosylation and sialic acid modifications. Glycosylation on Ser-6 is required for efficient binding of CCL4. Interacts with GRK2. Interacts with ARRB1 and ARRB2. Interacts with CNIH4. Interacts with S100A4; this interaction stimulates T-lymphocyte chemotaxis. Post-translationally, sulfated on at least 2 of the N-terminal tyrosines. Sulfation is required for efficient binding of the chemokines, CCL3 and CCL4. In terms of processing, palmitoylation in the C-terminal is important for cell surface expression. Phosphorylation on serine residues in the C-terminal is stimulated by binding CC chemokines especially by APO-RANTES. Post-translationally, O-glycosylated, but not N-glycosylated. Ser-6 appears to be the major site even if Ser-7 may be also O-glycosylated. Also sialylated glycans present which contribute to chemokine binding. Thr-16 and Ser-17 may also be glycosylated and, if so, with small moieties such as a T-antigen.

Its subcellular location is the cell membrane. Receptor for a number of inflammatory CC-chemokines including CCL3/MIP-1-alpha, CCL4/MIP-1-beta and RANTES and subsequently transduces a signal by increasing the intracellular calcium ion level. May play a role in the control of granulocytic lineage proliferation or differentiation. Participates in T-lymphocyte migration to the infection site by acting as a chemotactic receptor. This chain is C-C chemokine receptor type 5 (CCR5), found in Allochrocebus lhoesti (L'Hoest's monkey).